Consider the following 651-residue polypeptide: UvrABC system protein C (651 aa).

The GIY-YIG domain maps to 20–97; the sequence is ERCGVYRMFD…IKKFQPKFNI (78 aa). In terms of domain architecture, UVR spans 207-242; sequence KALQENLSKKMEELSSQMRFEEAAEIRDRIKALSYV.

The protein belongs to the UvrC family. In terms of assembly, interacts with UvrB in an incision complex.

The protein localises to the cytoplasm. Its function is as follows. The UvrABC repair system catalyzes the recognition and processing of DNA lesions. UvrC both incises the 5' and 3' sides of the lesion. The N-terminal half is responsible for the 3' incision and the C-terminal half is responsible for the 5' incision. In Rickettsia akari (strain Hartford), this protein is UvrABC system protein C.